Reading from the N-terminus, the 466-residue chain is ATP synthase subunit beta (466 aa).

Residue 156 to 163 (GGAGVGKT) participates in ATP binding.

Belongs to the ATPase alpha/beta chains family. As to quaternary structure, F-type ATPases have 2 components, CF(1) - the catalytic core - and CF(0) - the membrane proton channel. CF(1) has five subunits: alpha(3), beta(3), gamma(1), delta(1), epsilon(1). CF(0) has three main subunits: a(1), b(2) and c(9-12). The alpha and beta chains form an alternating ring which encloses part of the gamma chain. CF(1) is attached to CF(0) by a central stalk formed by the gamma and epsilon chains, while a peripheral stalk is formed by the delta and b chains.

Its subcellular location is the cell inner membrane. It catalyses the reaction ATP + H2O + 4 H(+)(in) = ADP + phosphate + 5 H(+)(out). Functionally, produces ATP from ADP in the presence of a proton gradient across the membrane. The catalytic sites are hosted primarily by the beta subunits. The protein is ATP synthase subunit beta of Polynucleobacter necessarius subsp. necessarius (strain STIR1).